We begin with the raw amino-acid sequence, 403 residues long: Golgin-45 (403 aa).

The tract at residues 1-63 (MEKMTTLKSS…PRKKVSSDSP (63 aa)) is disordered. The short motif at 22-26 (RGAGD) is the Tankyrase-binding motif element. Serine 53 carries the post-translational modification Phosphoserine. The stretch at 123–216 (RKELSEVKKV…QLERMSIQCD (94 aa)) forms a coiled coil. Phosphoserine is present on serine 356. Residues 397 to 403 (QGELIAL) are essential for interaction with GORASP2.

As to quaternary structure, interacts with GORASP2. Interacts with the GTP-bound form of RAB2, but not with other Golgi Rab proteins. Identified in a complex with RAB2 and GORASP2. In terms of processing, ADP-ribosylated by tankyrase TNKS and TNKS2. Poly-ADP-ribosylated protein is recognized by RNF146, followed by ubiquitination. Ubiquitinated by RNF146 when poly-ADP-ribosylated, leading to its degradation.

Its subcellular location is the golgi apparatus membrane. Required for normal Golgi structure and for protein transport from the endoplasmic reticulum (ER) through the Golgi apparatus to the cell surface. This is Golgin-45 (Blzf1) from Mus musculus (Mouse).